The chain runs to 290 residues: Endoplasmic reticulum-Golgi intermediate compartment protein 1 (290 aa).

Over 1–26 the chain is Cytoplasmic; it reads MPFDFRRFDIYRKVPKDLTQPTYTGA. Residues 27–47 traverse the membrane as a helical segment; the sequence is IISICCCLFITFLFLSELTGF. Residues 48 to 254 lie on the Lumenal side of the membrane; it reads IANEIVNELY…RRQPMYRFIT (207 aa). An N-linked (GlcNAc...) asparagine glycan is attached at Asn-74. A helical membrane pass occupies residues 255–275; the sequence is TVCAIIGGTFTVAGILDSFIF. The Cytoplasmic segment spans residues 276-290; it reads TASEAWKKIQLGKMQ.

This sequence belongs to the ERGIC family.

It is found in the endoplasmic reticulum membrane. The protein localises to the endoplasmic reticulum-Golgi intermediate compartment membrane. The protein resides in the golgi apparatus membrane. In terms of biological role, possible role in transport between endoplasmic reticulum and Golgi. The polypeptide is Endoplasmic reticulum-Golgi intermediate compartment protein 1 (ergic1) (Xenopus laevis (African clawed frog)).